We begin with the raw amino-acid sequence, 141 residues long: Drosulfakinins (141 aa).

An N-terminal signal peptide occupies residues 1-33; the sequence is MGLRSCTHLATLFMTLWALAFCFLVVVPIPAQT. Residues 34–73 constitute a propeptide that is removed on maturation; the sequence is TSLQNAKDDRRLQELESKIGAESDQPNANLVGPSFSRFGD. A disordered region spans residues 51–72; the sequence is KIGAESDQPNANLVGPSFSRFG. F82 is subject to Phenylalanine amide. The propeptide occupies 86–111; the sequence is VPLISRPMIPIELDLLMDNDDERTKA. A Sulfotyrosine modification is found at Y117. At F122 the chain carries Phenylalanine amide. Y134 is subject to Sulfotyrosine. The residue at position 139 (F139) is a Phenylalanine amide.

This sequence belongs to the gastrin/cholecystokinin family.

It is found in the secreted. Functionally, drosulfakinin-0 (DSK 0) plays diverse biological roles including regulating gut muscle contraction in adults but not in larvae. In Drosophila mauritiana (Fruit fly), this protein is Drosulfakinins.